The chain runs to 187 residues: Large ribosomal subunit protein uL13 (187 aa).

This sequence belongs to the universal ribosomal protein uL13 family. As to quaternary structure, part of the 50S ribosomal subunit.

Its function is as follows. This protein is one of the early assembly proteins of the 50S ribosomal subunit, although it is not seen to bind rRNA by itself. It is important during the early stages of 50S assembly. The chain is Large ribosomal subunit protein uL13 from Pyrobaculum aerophilum (strain ATCC 51768 / DSM 7523 / JCM 9630 / CIP 104966 / NBRC 100827 / IM2).